A 660-amino-acid polypeptide reads, in one-letter code: Bifunctional polymyxin resistance protein ArnA (660 aa).

Positions 1–304 (MKAVIFAYHD…TLGLVAGARL (304 aa)) are formyltransferase ArnAFT. Catalysis depends on H104, which acts as the Proton donor; for formyltransferase activity. Residues R114 and 136–140 (VKRAD) each bind (6R)-10-formyltetrahydrofolate. Residues 314–660 (RRIRVLILGV…RSVDVAERAS (347 aa)) are dehydrogenase ArnADH. NAD(+) contacts are provided by residues D347 and 368 to 369 (DI). Residues A393, Y398, and 432–433 (TS) contribute to the UDP-alpha-D-glucuronate site. Residue E434 is the Proton acceptor; for decarboxylase activity of the active site. UDP-alpha-D-glucuronate is bound by residues R460, N492, 526–535 (KLIDGGQQKR), and Y613. The Proton donor; for decarboxylase activity role is filled by R619.

The protein in the N-terminal section; belongs to the Fmt family. UDP-L-Ara4N formyltransferase subfamily. This sequence in the C-terminal section; belongs to the NAD(P)-dependent epimerase/dehydratase family. UDP-glucuronic acid decarboxylase subfamily. Homohexamer, formed by a dimer of trimers.

It carries out the reaction UDP-alpha-D-glucuronate + NAD(+) = UDP-beta-L-threo-pentopyranos-4-ulose + CO2 + NADH. The enzyme catalyses UDP-4-amino-4-deoxy-beta-L-arabinose + (6R)-10-formyltetrahydrofolate = UDP-4-deoxy-4-formamido-beta-L-arabinose + (6S)-5,6,7,8-tetrahydrofolate + H(+). It functions in the pathway nucleotide-sugar biosynthesis; UDP-4-deoxy-4-formamido-beta-L-arabinose biosynthesis; UDP-4-deoxy-4-formamido-beta-L-arabinose from UDP-alpha-D-glucuronate: step 1/3. It participates in nucleotide-sugar biosynthesis; UDP-4-deoxy-4-formamido-beta-L-arabinose biosynthesis; UDP-4-deoxy-4-formamido-beta-L-arabinose from UDP-alpha-D-glucuronate: step 3/3. The protein operates within bacterial outer membrane biogenesis; lipopolysaccharide biosynthesis. Bifunctional enzyme that catalyzes the oxidative decarboxylation of UDP-glucuronic acid (UDP-GlcUA) to UDP-4-keto-arabinose (UDP-Ara4O) and the addition of a formyl group to UDP-4-amino-4-deoxy-L-arabinose (UDP-L-Ara4N) to form UDP-L-4-formamido-arabinose (UDP-L-Ara4FN). The modified arabinose is attached to lipid A and is required for resistance to polymyxin and cationic antimicrobial peptides. This Salmonella heidelberg (strain SL476) protein is Bifunctional polymyxin resistance protein ArnA.